The chain runs to 433 residues: uncharacterized protein (433 aa).

Residues 61–178 (RFNHSLGVYE…QIDADRMDYL (118 aa)) enclose the HD domain.

This is an uncharacterized protein from Bacillus subtilis (strain 168).